We begin with the raw amino-acid sequence, 3258 residues long: Protein unc-80 homolog (3258 aa).

The disordered stretch occupies residues 152–173; the sequence is VENQGSPGQPCQSSSNDEEENN. Positions 155–166 are enriched in low complexity; it reads QGSPGQPCQSSS. Serine 257 is modified (phosphoserine). Disordered regions lie at residues 291–316, 449–468, 522–560, 697–717, 732–784, 963–1019, 1034–1076, 1404–1447, and 1817–1836; these read RGNS…RASL, RKED…GKRR, RRGS…HGEN, KKSE…GAFQ, PAVS…TPVS, PGKK…EQMQ, KSQS…ISLR, EDSK…MSNA, and AVSA…HHVP. Residues 295-307 are compositionally biased toward polar residues; sequence FDGSLSSQTSQER. Serine 525 is subject to Phosphoserine. Residues 698 to 712 show a composition bias toward basic and acidic residues; that stretch reads KSENKENETLEKRPS. Residues 732–767 are compositionally biased toward gly residues; that stretch reads PAVSGAGDGGGEEGGGGDGGGGGGDGGGGGGGGGGP. 2 stretches are compositionally biased toward basic and acidic residues: residues 769–780 and 965–974; these read EKNDKNQEKDES and KKVEENEQES. A compositionally biased stretch (low complexity) spans 1035–1052; the sequence is SQSAASDTSSQSEQDTSE. Over residues 1066–1076 the composition is skewed to basic residues; sequence ARSRSRRISLR. Residues 1417-1429 show a composition bias toward basic and acidic residues; it reads LKSDAGVEEKKEG. Helical transmembrane passes span 2268 to 2288, 2398 to 2418, 2785 to 2805, and 2831 to 2851; these read PFVL…DAAN, IAAT…VEVL, GLAE…LVCF, and LALW…FVLL. Residues 2942-2964 are compositionally biased toward polar residues; sequence NTGTGTVWEQDSEPSQQASQDTL. Residues 2942–2982 are disordered; it reads NTGTGTVWEQDSEPSQQASQDTLSRTDEEDEENDSISMPSV. A Phosphoserine modification is found at serine 3042. The interval 3051 to 3213 is disordered; the sequence is NLLVQQPLGR…DDFTGLETSS (163 aa). Positions 3059-3068 are enriched in basic residues; the sequence is GRKRGLRQLR. The span at 3088–3100 shows a compositional bias: polar residues; that stretch reads RLSTTRRSIQPKT. Over residues 3117 to 3129 the composition is skewed to low complexity; that stretch reads PEPAAAPTDALPA. Residues 3175–3186 show a composition bias toward acidic residues; the sequence is PTEEGEKEEDTE.

Belongs to the unc-80 family. As to quaternary structure, NALCN complex consists of NALCN and auxiliary subunits, UNC79, UNC80 and NACL1. These auxiliary subunits are essential for the NALCN complex function. Interacts (via N-terminus half) with NALCN; this interaction facilitates NALCN surface localization. Interacts with UNC79. UNC80 bridges NALCN to UNC79. Phosphorylated on tyrosine residues. In terms of tissue distribution, moderately expressed in fetal brain, spinal cord, skeletal muscle, thymus, spleen, fetal liver, small intestine, colon, kidney and uterus. Highly expressed in adrenal gland, prostate and testis, as well as in brain and cerebellum.

It is found in the cell membrane. Auxiliary subunit of the NALCN sodium channel complex, a voltage-gated ion channel responsible for the resting Na(+) permeability that controls neuronal excitability. Activated by neuropeptides substance P, neurotensin, and extracellular Ca(2+) that regulates neuronal excitability by controlling the sizes of NALCN-dependent sodium-leak current. UNC80 is essential for NALCN sensitivity to extracellular Ca(2+). This Homo sapiens (Human) protein is Protein unc-80 homolog.